A 146-amino-acid polypeptide reads, in one-letter code: Large ribosomal subunit protein uL15 (146 aa).

The interval M1–L57 is disordered.

The protein belongs to the universal ribosomal protein uL15 family. As to quaternary structure, part of the 50S ribosomal subunit.

Binds to the 23S rRNA. The protein is Large ribosomal subunit protein uL15 of Agathobacter rectalis (strain ATCC 33656 / DSM 3377 / JCM 17463 / KCTC 5835 / VPI 0990) (Eubacterium rectale).